A 636-amino-acid chain; its full sequence is Threonine--tRNA ligase (636 aa).

The TGS domain maps to 1–61 (MPVITLPDGS…TQDASLQLIT (61 aa)). The segment at 243–534 (DHRKIGKTLD…LIEEFTGKFP (292 aa)) is catalytic. Residues Cys-334, His-385, and His-511 each contribute to the Zn(2+) site.

Belongs to the class-II aminoacyl-tRNA synthetase family. Homodimer. Zn(2+) serves as cofactor.

It localises to the cytoplasm. The catalysed reaction is tRNA(Thr) + L-threonine + ATP = L-threonyl-tRNA(Thr) + AMP + diphosphate + H(+). Functionally, catalyzes the attachment of threonine to tRNA(Thr) in a two-step reaction: L-threonine is first activated by ATP to form Thr-AMP and then transferred to the acceptor end of tRNA(Thr). Also edits incorrectly charged L-seryl-tRNA(Thr). The protein is Threonine--tRNA ligase of Colwellia psychrerythraea (strain 34H / ATCC BAA-681) (Vibrio psychroerythus).